We begin with the raw amino-acid sequence, 122 residues long: Large ribosomal subunit protein uL14 (122 aa).

Belongs to the universal ribosomal protein uL14 family. Part of the 50S ribosomal subunit. Forms a cluster with proteins L3 and L19. In the 70S ribosome, L14 and L19 interact and together make contacts with the 16S rRNA in bridges B5 and B8.

In terms of biological role, binds to 23S rRNA. Forms part of two intersubunit bridges in the 70S ribosome. In Albidiferax ferrireducens (strain ATCC BAA-621 / DSM 15236 / T118) (Rhodoferax ferrireducens), this protein is Large ribosomal subunit protein uL14.